The sequence spans 461 residues: L-seryl-tRNA(Sec) selenium transferase (461 aa).

At Lys-294 the chain carries N6-(pyridoxal phosphate)lysine.

This sequence belongs to the SelA family. Pyridoxal 5'-phosphate is required as a cofactor.

It localises to the cytoplasm. The enzyme catalyses L-seryl-tRNA(Sec) + selenophosphate + H(+) = L-selenocysteinyl-tRNA(Sec) + phosphate. It participates in aminoacyl-tRNA biosynthesis; selenocysteinyl-tRNA(Sec) biosynthesis; selenocysteinyl-tRNA(Sec) from L-seryl-tRNA(Sec) (bacterial route): step 1/1. Functionally, converts seryl-tRNA(Sec) to selenocysteinyl-tRNA(Sec) required for selenoprotein biosynthesis. This Haemophilus influenzae (strain 86-028NP) protein is L-seryl-tRNA(Sec) selenium transferase.